A 1771-amino-acid chain; its full sequence is Kinase D-interacting substrate of 220 kDa (1771 aa).

Residues 1–499 (MSVLISQSVI…QIEPLFQFSW (499 aa)) lie on the Cytoplasmic side of the membrane. ANK repeat units lie at residues 4-33 (LISQSVINYVEEENIPALKALLEKCKDVDE), 37-66 (CGQTPLMIAAEQGNLEIVKELIKNGANCNL), 70-99 (DNWTALISASKEGHVHIVEELLKCGVNLEH), 103-132 (GGWTALMWACYKGRTDVVELLLSHGANPSV), 136-165 (YSVYPIIWAAGRGHADIVHLLLQNGAKVNC), 169-198 (YGTTPLVWAARKGHLECVKHLLAMGADVDQ), 202-231 (NSMTALIVAVKGGYTQSVKEILKRNPNVNL), 235-264 (DGNTALMIASKEGHTEIVQDLLDAGTYVNI), 268-297 (SGDTVLIGAVRGGHVEIVRALLQKYADIDI), 301-330 (DNKTALYWAVEKGNATMVRDILQCNPDTEI), 334-363 (DGETPLIKATKMRNIEVVELLLDKGAKVSA), and 367-396 (KGDTPLHIAIRGRSRKLAELLLRNPKDGRL). A KAP NTPase domain is found at 440–953 (YDLYSSALAD…NIVSVTGRLL (514 aa)). The chain crosses the membrane as a helical span at residues 500 to 520 (LIVFLTLLLCGGLGLLFAFTV). Residues 521–524 (HPNL) lie on the Extracellular side of the membrane. The helical transmembrane segment at 525 to 545 (GIAVSLSFLALLYIFFIVIYF) threads the bilayer. Residues 546-659 (GGRREGESWN…KWKKTCCLPS (114 aa)) are Cytoplasmic-facing. The chain crosses the membrane as a helical span at residues 660 to 680 (FVIFLFIIGCIISGITLLAIF). The Extracellular segment spans residues 681–685 (RVDPK). A helical membrane pass occupies residues 686 to 706 (HLTVNAVLISIASVVGLAFVL). Over 707-1771 (NCRTWWQVLD…GFGEERESIL (1065 aa)) the chain is Cytoplasmic. Ser882 and Ser885 each carry phosphoserine. Thr914 carries the phosphothreonine modification. Ser918 carries the phosphoserine modification. The tract at residues 1089–1092 (PRAP) is mediates interaction with CRKL. A Phosphoserine modification is found at Ser1163. Disordered stretches follow at residues 1182–1202 (DAAEGLSSPTDSSRGSGPAPG), 1285–1310 (PEDPRFLSESSSGPAPHGEPARRASH), 1344–1368 (RHSNLSWQSQTRRTPSLSSLNSQDS), and 1397–1564 (LEGG…EPIR). Phosphoserine is present on residues Ser1296, Ser1352, Ser1359, Ser1361, Ser1362, and Ser1365. Residues 1346 to 1358 (SNLSWQSQTRRTP) show a composition bias toward polar residues. A compositionally biased stretch (low complexity) spans 1359–1368 (SLSSLNSQDS). Residues 1403–1430 (STTISGRSSPHSTYYMGQSSSGGSIHSN) are compositionally biased toward polar residues. Residues 1431–1457 (LEQEKGKDSEPKPDDGRKSFLMKRGDV) are compositionally biased toward basic and acidic residues. Polar residues predominate over residues 1460–1470 (YSSSGVSTNDA). A phosphoserine mark is found at Ser1521, Ser1526, Ser1555, and Ser1574. Over residues 1522–1532 (DEDESGTEESD) the composition is skewed to acidic residues. Over residues 1537–1561 (LKDDKDRKAEGKVERVPKSPEHSAE) the composition is skewed to basic and acidic residues. The tract at residues 1578–1633 (LDKKDSSDSGVRSSESSPNHSLHNEVADDSQLEKANLIELEDDSHSGKRGIPHSLS) is disordered. The segment covering 1585-1594 (DSGVRSSESS) has biased composition (low complexity). Ser1623 and Ser1633 each carry phosphoserine. Position 1679 is a phosphothreonine (Thr1679). Ser1681 carries the post-translational modification Phosphoserine. The residue at position 1684 (Thr1684) is a Phosphothreonine. The span at 1713–1731 (LRPSSSPNPTTIQNENLKS) shows a compositional bias: polar residues. The tract at residues 1713–1771 (LRPSSSPNPTTIQNENLKSMTHKRSQRSSYTRLSKDPPELHAAASSESTGFGEERESIL) is disordered. The PDZ-binding signature appears at 1766 to 1771 (ERESIL).

As to quaternary structure, found in a complex, at least composed of KIDINS220, MAGI2, NTRK1 and RAPGEF2; the complex is mainly formed at late endosomes in a nerve growth factor (NGF)-dependent manner. Interacts with RAPGEF2; the interaction is strengthened after NGF stimulation. Isoform 2 interacts (via C-terminal domain) with MAGI2 isoform 1 (via PDZ domain). Interacts with NTRK1, NTRK2, NTRK3, ERKL and NGFR. Can form a ternary complex with NGFR and NTRK1 and this complex is affected by the expression levels of KIDINS220/ARMS. An increase in KIDINS220/ARMS expression leads to a decreased association of NGFR and NTRK1. Interacts (via PDZ-binding motif) with SNTA1 and SNTB2 (via PDZ domains). Interacts with EPHA4 and PRKD1. In terms of processing, tyrosine phosphorylated by NTRK1, NTRK2, EPHB2 and EPHA4. Phosphorylation at Ser-918 is induced by phorbol ester treatment. Phosphorylation by NTRK2 is induced by brain-derived neurotrophic factor (BDNF) and neurotrophin-4/5. Phosphorylation by NTRK1 is induced by nerve growth factor (NGF). Abundant in developing and adult neural tissues as well as neuroendocrine cells and dendritic cells. Overexpressed in melanoma and melanoma cell lines.

It is found in the membrane. Its subcellular location is the late endosome. Functionally, promotes a prolonged MAP-kinase signaling by neurotrophins through activation of a Rap1-dependent mechanism. Provides a docking site for the CRKL-C3G complex, resulting in Rap1-dependent sustained ERK activation. May play an important role in regulating postsynaptic signal transduction through the syntrophin-mediated localization of receptor tyrosine kinases such as EPHA4. In cooperation with SNTA1 can enhance EPHA4-induced JAK/STAT activation. Plays a role in nerve growth factor (NGF)-induced recruitment of RAPGEF2 to late endosomes and neurite outgrowth. May play a role in neurotrophin- and ephrin-mediated neuronal outgrowth and in axon guidance during neural development and in neuronal regeneration. Modulates stress-induced apoptosis of melanoma cells via regulation of the MEK/ERK signaling pathway. The chain is Kinase D-interacting substrate of 220 kDa (KIDINS220) from Homo sapiens (Human).